The sequence spans 572 residues: Adenine deaminase (572 aa).

This sequence belongs to the metallo-dependent hydrolases superfamily. Adenine deaminase family. Mn(2+) serves as cofactor.

The enzyme catalyses adenine + H2O + H(+) = hypoxanthine + NH4(+). The protein is Adenine deaminase of Clostridium perfringens (strain 13 / Type A).